Reading from the N-terminus, the 177-residue chain is Inner membrane-spanning protein YciB (177 aa).

A run of 5 helical transmembrane segments spans residues 22–42 (IFIA…IHWI), 50–70 (ISLF…FFHN), 76–96 (WKIT…QFFT), 121–141 (FIWS…AYYF), and 149–169 (FKVF…SIYI).

The protein belongs to the YciB family.

The protein localises to the cell inner membrane. In terms of biological role, plays a role in cell envelope biogenesis, maintenance of cell envelope integrity and membrane homeostasis. The sequence is that of Inner membrane-spanning protein YciB from Buchnera aphidicola subsp. Acyrthosiphon pisum (strain 5A).